The chain runs to 179 residues: Replication restart protein DnaT (179 aa).

Positions 151–168 (SRSSNGGMPQRDINSVSE) are enriched in polar residues. The tract at residues 151 to 179 (SRSSNGGMPQRDINSVSEPDNHIPPGFRG) is disordered.

Belongs to the DnaT family. As to quaternary structure, homooligomerizes. Interacts with PriB. Component of the replication restart primosome. Primosome assembly occurs via a 'hand-off' mechanism. PriA binds to replication forks, subsequently PriB then DnaT bind; DnaT then displaces ssDNA to generate the helicase loading substrate.

Functionally, involved in the restart of stalled replication forks, which reloads the replicative helicase on sites other than the origin of replication. Can function in multiple replication restart pathways. Displaces ssDNA from a PriB-ssDNA complex. Probably forms a spiral filament on ssDNA. The chain is Replication restart protein DnaT from Salmonella heidelberg (strain SL476).